The sequence spans 283 residues: Pantothenate synthetase (283 aa).

An ATP-binding site is contributed by 30-37 (MGALHEGH). Histidine 37 serves as the catalytic Proton donor. Glutamine 61 lines the (R)-pantoate pocket. Glutamine 61 contacts beta-alanine. 147–150 (GEKD) contributes to the ATP binding site. A (R)-pantoate-binding site is contributed by glutamine 153. Residues isoleucine 176 and 184 to 187 (VSSR) each bind ATP.

The protein belongs to the pantothenate synthetase family. As to quaternary structure, homodimer.

Its subcellular location is the cytoplasm. It carries out the reaction (R)-pantoate + beta-alanine + ATP = (R)-pantothenate + AMP + diphosphate + H(+). The protein operates within cofactor biosynthesis; (R)-pantothenate biosynthesis; (R)-pantothenate from (R)-pantoate and beta-alanine: step 1/1. Catalyzes the condensation of pantoate with beta-alanine in an ATP-dependent reaction via a pantoyl-adenylate intermediate. In Pelodictyon phaeoclathratiforme (strain DSM 5477 / BU-1), this protein is Pantothenate synthetase.